The sequence spans 216 residues: Uridine kinase (216 aa).

16–23 (GASASGKS) is an ATP binding site.

Belongs to the uridine kinase family.

It localises to the cytoplasm. The enzyme catalyses uridine + ATP = UMP + ADP + H(+). It carries out the reaction cytidine + ATP = CMP + ADP + H(+). The protein operates within pyrimidine metabolism; CTP biosynthesis via salvage pathway; CTP from cytidine: step 1/3. It functions in the pathway pyrimidine metabolism; UMP biosynthesis via salvage pathway; UMP from uridine: step 1/1. In Pasteurella multocida (strain Pm70), this protein is Uridine kinase.